Reading from the N-terminus, the 567-residue chain is Oxygen-dependent choline dehydrogenase (567 aa).

4-33 (DYIIIGAGSAGNVLAARLTEDADVTVLLLE) serves as a coordination point for FAD. His473 acts as the Proton acceptor in catalysis.

Belongs to the GMC oxidoreductase family. FAD serves as cofactor.

The enzyme catalyses choline + A = betaine aldehyde + AH2. The catalysed reaction is betaine aldehyde + NAD(+) + H2O = glycine betaine + NADH + 2 H(+). It participates in amine and polyamine biosynthesis; betaine biosynthesis via choline pathway; betaine aldehyde from choline (cytochrome c reductase route): step 1/1. Functionally, involved in the biosynthesis of the osmoprotectant glycine betaine. Catalyzes the oxidation of choline to betaine aldehyde and betaine aldehyde to glycine betaine at the same rate. This Yersinia pseudotuberculosis serotype O:1b (strain IP 31758) protein is Oxygen-dependent choline dehydrogenase.